The chain runs to 231 residues: TATA-box-binding protein (231 aa).

2 repeat units span residues 58 to 134 and 148 to 225.

This sequence belongs to the TBP family. In terms of assembly, belongs to the TFIID complex together with the TBP-associated factors (TAFs). Binds DNA as monomer.

It is found in the nucleus. Its function is as follows. General transcription factor that functions at the core of the DNA-binding multiprotein factor TFIID. Binding of TFIID to the TATA box is the initial transcriptional step of the pre-initiation complex (PIC), playing a role in the activation of eukaryotic genes transcribed by RNA polymerase II. The chain is TATA-box-binding protein (tbp1) from Schizosaccharomyces pombe (strain 972 / ATCC 24843) (Fission yeast).